We begin with the raw amino-acid sequence, 156 residues long: ATP synthase subunit b (156 aa).

The chain crosses the membrane as a helical span at residues 7–29 (LFAQMVVFLVLAWFTMKFVWPPL).

The protein belongs to the ATPase B chain family. F-type ATPases have 2 components, F(1) - the catalytic core - and F(0) - the membrane proton channel. F(1) has five subunits: alpha(3), beta(3), gamma(1), delta(1), epsilon(1). F(0) has three main subunits: a(1), b(2) and c(10-14). The alpha and beta chains form an alternating ring which encloses part of the gamma chain. F(1) is attached to F(0) by a central stalk formed by the gamma and epsilon chains, while a peripheral stalk is formed by the delta and b chains.

The protein resides in the cell inner membrane. Its function is as follows. F(1)F(0) ATP synthase produces ATP from ADP in the presence of a proton or sodium gradient. F-type ATPases consist of two structural domains, F(1) containing the extramembraneous catalytic core and F(0) containing the membrane proton channel, linked together by a central stalk and a peripheral stalk. During catalysis, ATP synthesis in the catalytic domain of F(1) is coupled via a rotary mechanism of the central stalk subunits to proton translocation. Component of the F(0) channel, it forms part of the peripheral stalk, linking F(1) to F(0). The protein is ATP synthase subunit b of Burkholderia lata (strain ATCC 17760 / DSM 23089 / LMG 22485 / NCIMB 9086 / R18194 / 383).